Reading from the N-terminus, the 344-residue chain is L-rhamnose-proton symporter (344 aa).

Transmembrane regions (helical) follow at residues 4–24 (AITMGIFWHLIGAASAACFYA), 38–58 (WSVGGIVSWIILPWAISALLL), 68–88 (FSLSTLLPVFLFGAMCGIGNI), 101–121 (MGIGIAIGITLIVGTLMTPII), 137–157 (TLLGVLVALIGVGIVTRAGQL), 175–195 (LVLAVMCGIFSAGMSFAMNAA), 214–234 (LPSYVVIMGGGAIINLGFCFI), 259–279 (VLLSTLGGLMWYLQFFFYAWG), 290–310 (ISWMLHMSFYVLCGGIVGLVL), and 323–343 (VLSLGCVVIIVAANIVGIGMA).

Belongs to the L-rhamnose transporter (TC 2.A.7.6) family.

The protein localises to the cell inner membrane. It catalyses the reaction L-rhamnopyranose(in) + H(+)(in) = L-rhamnopyranose(out) + H(+)(out). Uptake of L-rhamnose across the cytoplasmic membrane with the concomitant transport of protons into the cell (symport system). This Escherichia coli O9:H4 (strain HS) protein is L-rhamnose-proton symporter.